The chain runs to 950 residues: Protocadherin alpha-13 (950 aa).

The first 29 residues, 1 to 29, serve as a signal peptide directing secretion; the sequence is MLSSWQGGPRPRQLLLWLLILAAWETGSG. Topologically, residues 30–697 are extracellular; sequence QLHYSVPEEA…GPEAALVDVN (668 aa). Cadherin domains are found at residues 34-133, 134-242, 243-350, 351-455, 456-565, and 581-678; these read SVPE…PPIF, PESK…APEF, YQSV…APEV, TITS…APAF, AQPE…APAL, and MPRS…APQA. N-linked (GlcNAc...) asparagine glycosylation is found at asparagine 257 and asparagine 265. The N-linked (GlcNAc...) asparagine glycan is linked to asparagine 548. Residues 698–718 traverse the membrane as a helical segment; that stretch reads VYLIIAICAVSSLLVLTLLLY. Over 719–950 the chain is Cytoplasmic; the sequence is TALRCSAPPT…GNSTTDNSDQ (232 aa). PXXP repeat units lie at residues 734–737, 774–777, 799–802, 832–835, 873–876, and 891–894; these read PGKP, PSLP, PRQP, PGGP, PGNP, and PGSP. The interval 734–894 is 6 X 4 AA repeats of P-X-X-P; the sequence is PGKPTLVCSS…PDKFIIPGSP (161 aa). Disordered stretches follow at residues 780–806 and 829–950; these read LGSA…NPDW and RAGP…NSDQ. Positions 787-800 are enriched in basic and acidic residues; the sequence is GQREEDSECLKEPR. Residues 909-923 show a composition bias toward basic and acidic residues; that stretch reads DKSDFITFGKKEETK.

It is found in the cell membrane. Functionally, potential calcium-dependent cell-adhesion protein. May be involved in the establishment and maintenance of specific neuronal connections in the brain. The protein is Protocadherin alpha-13 (PCDHA13) of Homo sapiens (Human).